Here is a 589-residue protein sequence, read N- to C-terminus: ATP-dependent lipid A-core flippase (589 aa).

Helical transmembrane passes span 29-49 (LLLVAALIAALIEAAGTTGFL), 70-90 (WLPVQIILLFVIRGAAGYITD), 157-177 (VIGALALMLWHSWQVTLTILV), 261-281 (MIGAIGLSALLFVAGAQALAG), and 283-303 (LTAGDFVVLMTSMLTIIPGLK). The ABC transmembrane type-1 domain maps to 32-314 (VAALIAALIE…LTNVQNMVQR (283 aa)). In terms of domain architecture, ABC transporter spans 346-582 (IEFRDVTARY…GGLYSHLHGM (237 aa)). 380 to 387 (GRSGSGKS) provides a ligand contact to ATP.

Belongs to the ABC transporter superfamily. Lipid exporter (TC 3.A.1.106) family. Homodimer.

It localises to the cell inner membrane. It catalyses the reaction ATP + H2O + lipid A-core oligosaccharideSide 1 = ADP + phosphate + lipid A-core oligosaccharideSide 2.. Its function is as follows. Involved in lipopolysaccharide (LPS) biosynthesis. Translocates lipid A-core from the inner to the outer leaflet of the inner membrane. Transmembrane domains (TMD) form a pore in the inner membrane and the ATP-binding domain (NBD) is responsible for energy generation. The chain is ATP-dependent lipid A-core flippase from Xanthomonas campestris pv. campestris (strain 8004).